The chain runs to 478 residues: Glutamate--tRNA ligase 1 (478 aa).

The 'HIGH' region motif lies at 10-20 (PSPTGFLHIGG). Residues 242 to 246 (KLSKR) carry the 'KMSKS' region motif. Lysine 245 contributes to the ATP binding site.

The protein belongs to the class-I aminoacyl-tRNA synthetase family. Glutamate--tRNA ligase type 1 subfamily. Monomer.

It localises to the cytoplasm. It carries out the reaction tRNA(Glu) + L-glutamate + ATP = L-glutamyl-tRNA(Glu) + AMP + diphosphate. Its function is as follows. Catalyzes the attachment of glutamate to tRNA(Glu) in a two-step reaction: glutamate is first activated by ATP to form Glu-AMP and then transferred to the acceptor end of tRNA(Glu). This chain is Glutamate--tRNA ligase 1, found in Orientia tsutsugamushi (strain Boryong) (Rickettsia tsutsugamushi).